A 382-amino-acid polypeptide reads, in one-letter code: (R,R)-butanediol dehydrogenase (382 aa).

Cys39 is a Zn(2+) binding site. The residue at position 63 (Ser63) is a Phosphoserine. Residues His73, Cys103, Cys120, Cys123, Cys131, and Glu173 each contribute to the Zn(2+) site.

The protein belongs to the zinc-containing alcohol dehydrogenase family. In terms of assembly, homodimer. Zn(2+) serves as cofactor.

The protein resides in the cytoplasm. The catalysed reaction is (R,R)-butane-2,3-diol + NAD(+) = (R)-acetoin + NADH + H(+). In terms of biological role, NAD-dependent (R,R)-butanediol dehydrogenase which catalyzes oxidation of (R,R)-butane-2,3-diol to (3R)-acetoin, of meso-butanediol to (3S)-acetoin, and reduction of acetoin. Allows the use of 2,3-butanediol as an aerobic carbon source. The sequence is that of (R,R)-butanediol dehydrogenase (BDH1) from Saccharomyces cerevisiae (strain ATCC 204508 / S288c) (Baker's yeast).